A 447-amino-acid chain; its full sequence is Tol-Pal system protein TolB (447 aa).

The signal sequence occupies residues Met-1 to Ala-29.

This sequence belongs to the TolB family. As to quaternary structure, the Tol-Pal system is composed of five core proteins: the inner membrane proteins TolA, TolQ and TolR, the periplasmic protein TolB and the outer membrane protein Pal. They form a network linking the inner and outer membranes and the peptidoglycan layer.

Its subcellular location is the periplasm. Part of the Tol-Pal system, which plays a role in outer membrane invagination during cell division and is important for maintaining outer membrane integrity. The chain is Tol-Pal system protein TolB from Paramagnetospirillum magneticum (strain ATCC 700264 / AMB-1) (Magnetospirillum magneticum).